Reading from the N-terminus, the 577-residue chain is Arginine--tRNA ligase (577 aa).

Residues 122–132 (PNVAKEMHVGH) carry the 'HIGH' region motif.

It belongs to the class-I aminoacyl-tRNA synthetase family. In terms of assembly, monomer.

It is found in the cytoplasm. It catalyses the reaction tRNA(Arg) + L-arginine + ATP = L-arginyl-tRNA(Arg) + AMP + diphosphate. This is Arginine--tRNA ligase from Salmonella paratyphi A (strain ATCC 9150 / SARB42).